The primary structure comprises 105 residues: Large ribosomal subunit protein bL21 (105 aa).

It belongs to the bacterial ribosomal protein bL21 family. As to quaternary structure, part of the 50S ribosomal subunit. Contacts protein L20.

In terms of biological role, this protein binds to 23S rRNA in the presence of protein L20. The polypeptide is Large ribosomal subunit protein bL21 (Stenotrophomonas maltophilia (strain R551-3)).